Here is a 192-residue protein sequence, read N- to C-terminus: Charged multivesicular body protein 1 (192 aa).

Coiled-coil stretches lie at residues 7–35 (QLKF…KLKK) and 102–125 (NMDL…LDVQ). A disordered region spans residues 164-192 (QMGSAPSEKVQQGETDELTERLNRLKQKN).

The protein belongs to the SNF7 family. In terms of assembly, probable peripherally associated component of the endosomal sorting required for transport complex III (ESCRT-III).

It is found in the endosome membrane. Functionally, probable peripherally associated component of the endosomal sorting required for transport complex III (ESCRT-III) which is involved in multivesicular bodies (MVBs) formation and sorting of endosomal cargo proteins into MVBs. MVBs contain intraluminal vesicles (ILVs) that are generated by invagination and scission from the limiting membrane of the endosome and are delivered to lysosomes enabling degradation of membrane proteins. This is Charged multivesicular body protein 1 (chmp1) from Dictyostelium discoideum (Social amoeba).